The primary structure comprises 157 residues: Protein Smg (157 aa).

This sequence belongs to the Smg family.

The chain is Protein Smg from Klebsiella pneumoniae (strain 342).